Reading from the N-terminus, the 36-residue chain is Serine protease inhibitor 2 (36 aa).

A Pacifastin domain is found at 1-36 (EISCEPGTTFQDKCNTCRCGKDGKSAAGCTLKACPQ). 3 cysteine pairs are disulfide-bonded: Cys4-Cys19, Cys14-Cys34, and Cys17-Cys29.

Belongs to the protease inhibitor I19 family. In terms of tissue distribution, expressed in hemolymph.

It is found in the secreted. In terms of biological role, probable serine protease inhibitor. This Melanoplus sanguinipes (Migratory grasshopper) protein is Serine protease inhibitor 2.